The following is a 444-amino-acid chain: MPVSSDPKTFYIETFGCQMNFHDSEKVVGTLISQGYRQVETELDAGLILYNTCSIRDKAEQKVFHRLSEFRQLQKEGKRFAVLGCVAQQEGEKIFERAPHVSLVAGSASYRNLAEMLVQIESGSQRITGLDDRETDQTFETEFTARGNAHRGYITIIEGCDKFCAYCVVPYTRGKERSRSAESVLREARQMADAGFTDVQLLGQNVNSYHDPSGTMTFAELLTAVGEITGIKRVRFTTSHPRDFTRDIVEAIDNHPTLCDHVHLPVQSGSSKVLREMFREYTREQYLERISWMKATKNRKLSITTDVIVGFPGETETEFEETLALLDHVQYDGVFSFKYSPRPNTPALKYIDTVPEQEKSRRLQILMEHQREIQRANYRKHIGETIEVMVEAENATRAQWIGRTSQNKTLNFTVPQTVQPEIGSYHQVLVTQAFPNSLVGELVG.

The MTTase N-terminal domain occupies 8 to 122 (KTFYIETFGC…LAEMLVQIES (115 aa)). 6 residues coordinate [4Fe-4S] cluster: C17, C53, C85, C160, C164, and C167. The Radical SAM core domain maps to 146-376 (RGNAHRGYIT…MEHQREIQRA (231 aa)). Residues 379–444 (RKHIGETIEV…PNSLVGELVG (66 aa)) form the TRAM domain.

This sequence belongs to the methylthiotransferase family. MiaB subfamily. Monomer. [4Fe-4S] cluster is required as a cofactor.

The protein localises to the cytoplasm. It carries out the reaction N(6)-dimethylallyladenosine(37) in tRNA + (sulfur carrier)-SH + AH2 + 2 S-adenosyl-L-methionine = 2-methylsulfanyl-N(6)-dimethylallyladenosine(37) in tRNA + (sulfur carrier)-H + 5'-deoxyadenosine + L-methionine + A + S-adenosyl-L-homocysteine + 2 H(+). Its function is as follows. Catalyzes the methylthiolation of N6-(dimethylallyl)adenosine (i(6)A), leading to the formation of 2-methylthio-N6-(dimethylallyl)adenosine (ms(2)i(6)A) at position 37 in tRNAs that read codons beginning with uridine. In Koribacter versatilis (strain Ellin345), this protein is tRNA-2-methylthio-N(6)-dimethylallyladenosine synthase.